A 300-amino-acid chain; its full sequence is Acetylglutamate kinase (300 aa).

Substrate is bound by residues 72 to 73, R94, and N197; that span reads GG.

Belongs to the acetylglutamate kinase family. ArgB subfamily.

The protein resides in the cytoplasm. The catalysed reaction is N-acetyl-L-glutamate + ATP = N-acetyl-L-glutamyl 5-phosphate + ADP. Its pathway is amino-acid biosynthesis; L-arginine biosynthesis; N(2)-acetyl-L-ornithine from L-glutamate: step 2/4. Catalyzes the ATP-dependent phosphorylation of N-acetyl-L-glutamate. The polypeptide is Acetylglutamate kinase (Aromatoleum aromaticum (strain DSM 19018 / LMG 30748 / EbN1) (Azoarcus sp. (strain EbN1))).